Here is a 241-residue protein sequence, read N- to C-terminus: Nopaline transport system permease protein NocM (241 aa).

The ABC transmembrane type-1 domain maps to 17–215; it reads VPTTLTLAFI…FITFVVSRLV (199 aa). 5 helical membrane passes run 21 to 41, 52 to 72, 95 to 115, 161 to 181, and 191 to 211; these read LTLA…VALM, LAYG…MFLI, PWFC…SEII, VMLI…EVTG, and YSPV…TFVV.

This sequence belongs to the binding-protein-dependent transport system permease family. HisMQ subfamily.

It is found in the cell inner membrane. Its function is as follows. Component of the nopaline active transport system probably consisting of four subunits: Q, M, P and T. This system is also capable of transporting octopine provided that catabolic functions are induced with nopaline. The polypeptide is Nopaline transport system permease protein NocM (nocM) (Agrobacterium fabrum (strain C58 / ATCC 33970) (Agrobacterium tumefaciens (strain C58))).